The chain runs to 46 residues: Hellethionin-D (46 aa).

4 disulfide bridges follow: Cys3–Cys40, Cys4–Cys32, Cys12–Cys30, and Cys16–Cys26.

Belongs to the plant thionin (TC 1.C.44) family. 4 C-C subfamily.

The protein localises to the secreted. In terms of biological role, thionins are small plant proteins which are toxic to animal cells. They seem to exert their toxic effect at the level of the cell membrane. Their precise function is not known. The polypeptide is Hellethionin-D (Helleborus purpurascens (Purple hellebore)).